We begin with the raw amino-acid sequence, 161 residues long: Globin CTT-VIIB-6 (161 aa).

Positions 1-16 are cleaved as a signal peptide; sequence MKFFAVLALCIVGAIA. Positions 18–161 constitute a Globin domain; sequence PLTADEASLV…NTFAIVVPRL (144 aa). The heme b site is built by His-76 and His-111.

Belongs to the globin family. In terms of assembly, homodimer.

The chain is Globin CTT-VIIB-6 (CTT-7B6) from Chironomus thummi thummi (Midge).